The sequence spans 336 residues: Meiotic drive suppressor wtf23 (336 aa).

Disordered stretches follow at residues 1–21 (MKNNYTSLKSPIDEEDELKTG) and 35–68 (DSEEEGALPPYSDHARVSNPPNTHRENHSSGTTD). 7 consecutive transmembrane segments (helical) span residues 73–93 (FLIKLLISFTPIVLLNALAVW), 110–130 (WTLFGFWCLVCTLVLIILTYF), 140–160 (VTVIFLAQCIKVTAVFLAQCV), 169–189 (EMMIIIWILWLIICCILFGCV), 206–226 (TISAVLFLIVSSVCIPIWTLW), 228–248 (ALSGMLQVLGIHGIIAVLVNG), and 261–281 (GYEIEGFVLFFTSNALFLYEM).

It belongs to the WTF family. Homomer. Interacts with other proteins that exhibit high sequence similarity.

The protein resides in the spore membrane. The protein localises to the vacuole membrane. Its function is as follows. Acts as a suppressor component of the dual wtf meiotic drive system, and can suppress but not confer meiotic drive by compatible poisons. Wtf meiotic drive systems promote unequal transmission of alleles from the parental zygote to progeny spores by encoding a poison and an antidote from the same locus; the poison is trans-acting and forms toxic aggregates in all spores within an ascus, wherease the antidote is spore-specific and targets aggregates for degradation by the vacuole. Meiotic drive by wtf systems therefore lead to poisoning of all progeny that do not inherit the dual poison/antidote allele, or express a compatible antidote. The sequence is that of Meiotic drive suppressor wtf23 from Schizosaccharomyces kambucha (Fission yeast).